A 254-amino-acid chain; its full sequence is MRQKRAKSYRKQLLVYSHTFKFREPYQVLVDNQLVLECNNSNFNLPSGLKRTLQADVKVMITQCCIQALYETRNDGAINLAKQFERRRCNHSFKDPKSPAECIESVVNISGANKHRYVVASQDIDLRRKLRTVPGVPLIHLTRSVMVMEPLSTASAKASKITEEQKLYKGLNDPNIEKLQESGDGSGKESITKKRKLGPKAPNPLSVKKKKKVNSPSDEVKDKEDTSKEKKKRRRRKHKSNTNVPVSNGTTAAQ.

A disordered region spans residues 172 to 254 (NDPNIEKLQE…PVSNGTTAAQ (83 aa)). Basic and acidic residues-rich tracts occupy residues 175-192 (NIEK…ESIT) and 218-228 (DEVKDKEDTSK). Ser182 is subject to Phosphoserine. Residues 229–240 (EKKKRRRRKHKS) show a composition bias toward basic residues. Polar residues predominate over residues 241 to 254 (NTNVPVSNGTTAAQ).

It belongs to the UTP23/FCF1 family. UTP23 subfamily.

It localises to the mitochondrion. The protein localises to the nucleus. Its subcellular location is the nucleolus. Involved in rRNA-processing and ribosome biogenesis. The sequence is that of rRNA-processing protein UTP23 (UTP23) from Saccharomyces cerevisiae (strain ATCC 204508 / S288c) (Baker's yeast).